Consider the following 234-residue polypeptide: MAKLTKRMRVIRDKVEVTKEYEINEAVALLKELATAKFVESVDVAVNLGIDARKSDQNVRGATVLPHGTGRDIRVAVFTQGANAEAAKAAGADIVGMEDLAEQVKKGEMNFDVVVASPDAMRVVGQLGTILGPRGLMPNPKVGTVTPNVAEAVKNAKAGQVRYRNDKNGIIHTTIGKASFEANQLQENLEALLVALKKAKPSSAKGTFLKKVSISTTMGAGVTVDQASLDTQAN.

It belongs to the universal ribosomal protein uL1 family. Part of the 50S ribosomal subunit.

Binds directly to 23S rRNA. The L1 stalk is quite mobile in the ribosome, and is involved in E site tRNA release. Its function is as follows. Protein L1 is also a translational repressor protein, it controls the translation of the L11 operon by binding to its mRNA. In Vibrio atlanticus (strain LGP32) (Vibrio splendidus (strain Mel32)), this protein is Large ribosomal subunit protein uL1.